The chain runs to 139 residues: Probable trafficking protein particle complex subunit 2 (139 aa).

Belongs to the TRAPP small subunits family. Sedlin subfamily. As to quaternary structure, part of the multisubunit TRAPP (transport protein particle) complex.

Its subcellular location is the cytoplasm. The protein localises to the perinuclear region. The protein resides in the endoplasmic reticulum. It is found in the golgi apparatus. Functionally, may play a role in vesicular transport from endoplasmic reticulum to Golgi. Involved in dsRNA uptake. The sequence is that of Probable trafficking protein particle complex subunit 2 from Drosophila melanogaster (Fruit fly).